Here is a 393-residue protein sequence, read N- to C-terminus: Iripin-3 (393 aa).

The signal sequence occupies residues 1-16; the sequence is MKVITAFLSVFVLCSA. N-linked (GlcNAc...) asparagine glycans are attached at residues N104 and N265.

It belongs to the serpin family. As to quaternary structure, interacts with human KLKB1. Interacts with human ST14. Interacts with human F2 (thrombin). As to expression, saliva (at protein level). Expressed in salivary gland. Expressed in ovary during blood feeding.

It is found in the secreted. In terms of biological role, serine protease inhibitor that modulates blood feeding of ticks on vertebrate species. Moderately inhibits host plasma kallikrein (KLKB1), matriptase (ST14), trypsin, plasmin (PLG), thrombin (F2) and coagulation factor VIIa (F7). Slightly inhibits host alpha-chymotrypsin, tPA/tissue-type plasminogen activator (PLAT), uPA/urokinase-type plasminogen activator (PLAU) and coagulation factor XIIa (F12). Slightly inhibits the extrinsic pathway while not affecting the intrinsic and common pathways of host blood coagulation. Decreases synthesis and secretion of IL6 by mouse bone marrow-derived macrophages. Decreases viability of mouse B- and T-cells. Decreases proliferation of mouse CD4+ T-cells in response to stimulation. Inhibits Th1 immune responses in mouse cells. Promotes differentiation of mouse regulatory T-cells. The chain is Iripin-3 from Ixodes ricinus (Common tick).